We begin with the raw amino-acid sequence, 393 residues long: Protein FAM47E (393 aa).

Residues 326–354 are a coiled coil; that stretch reads VSHKAQEENFKKELQEQEELLADLHGTVA.

This sequence belongs to the FAM47 family. In terms of assembly, interacts with PRMT5; the interaction is direct. Interacts with WDR77.

The protein localises to the nucleus. Its subcellular location is the chromosome. It is found in the cytoplasm. In terms of biological role, promotes histone methylation by localizing the arginine methyltransferase PRMT5 to chromatin. The sequence is that of Protein FAM47E (FAM47E) from Homo sapiens (Human).